A 294-amino-acid chain; its full sequence is Lipoyl synthase (294 aa).

[4Fe-4S] cluster-binding residues include C35, C40, C46, C61, C65, C68, and S275. A Radical SAM core domain is found at 46–264 (CWGGGTATVM…RDQGLALGFR (219 aa)).

Belongs to the radical SAM superfamily. Lipoyl synthase family. The cofactor is [4Fe-4S] cluster.

Its subcellular location is the cytoplasm. It catalyses the reaction [[Fe-S] cluster scaffold protein carrying a second [4Fe-4S](2+) cluster] + N(6)-octanoyl-L-lysyl-[protein] + 2 oxidized [2Fe-2S]-[ferredoxin] + 2 S-adenosyl-L-methionine + 4 H(+) = [[Fe-S] cluster scaffold protein] + N(6)-[(R)-dihydrolipoyl]-L-lysyl-[protein] + 4 Fe(3+) + 2 hydrogen sulfide + 2 5'-deoxyadenosine + 2 L-methionine + 2 reduced [2Fe-2S]-[ferredoxin]. The protein operates within protein modification; protein lipoylation via endogenous pathway; protein N(6)-(lipoyl)lysine from octanoyl-[acyl-carrier-protein]: step 2/2. In terms of biological role, catalyzes the radical-mediated insertion of two sulfur atoms into the C-6 and C-8 positions of the octanoyl moiety bound to the lipoyl domains of lipoate-dependent enzymes, thereby converting the octanoylated domains into lipoylated derivatives. The polypeptide is Lipoyl synthase (Anaeromyxobacter dehalogenans (strain 2CP-C)).